A 221-amino-acid chain; its full sequence is Ependymin-1 (221 aa).

Residues 1–21 (MQAFAVAALSIWLCLGATTLA) form the signal peptide. N-linked (GlcNAc...) asparagine glycans are attached at residues asparagine 33, asparagine 73, and asparagine 97.

The protein belongs to the ependymin family. In terms of processing, binds calcium through the terminal sialic acids. As to expression, EPDs are synthesized in the meninx and secreted in the cerebrospinal fluid.

The protein localises to the secreted. Functionally, may play a role in neural plasticity. May be involved during axon regeneration. The protein is Ependymin-1 (epd1) of Oncorhynchus mykiss (Rainbow trout).